The primary structure comprises 184 residues: ADP-ribosylation factor-like protein 2 (184 aa).

A lipid anchor (N-myristoyl glycine) is attached at Gly2. GTP-binding positions include 23–30 (GLDNAGKT), 66–70 (DVGGQ), and 125–128 (NKQD).

Belongs to the small GTPase superfamily. Arf family. In terms of tissue distribution, ubiquitously expressed.

Its function is as follows. GTP-binding protein involved in protein trafficking; may modulate vesicle budding and uncoating within the Golgi apparatus. This chain is ADP-ribosylation factor-like protein 2 (Arl2), found in Drosophila melanogaster (Fruit fly).